The chain runs to 479 residues: Glucan 1,3-beta-glucosidase 2 (479 aa).

An N-terminal signal peptide occupies residues 1–21 (MMLFLIHLMALCCMFVAEVAC). Asparagine 25, asparagine 29, asparagine 63, asparagine 104, asparagine 187, and asparagine 193 each carry an N-linked (GlcNAc...) asparagine glycan. Glutamate 227 (proton donor) is an active-site residue. N-linked (GlcNAc...) asparagine glycosylation is found at asparagine 254, asparagine 285, and asparagine 288. Histidine 306 functions as the Nucleophile in the catalytic mechanism. N-linked (GlcNAc...) asparagine glycans are attached at residues asparagine 318 and asparagine 451. Serine 456 is lipidated: GPI-anchor amidated serine. Positions 457 to 479 (SASAIASNKMTLLLAFLLVILVI) are cleaved as a propeptide — removed in mature form.

This sequence belongs to the glycosyl hydrolase 5 (cellulase A) family. In terms of processing, predicted to be a substrate for cleavage by KEX2.

It localises to the cell membrane. It is found in the secreted. The catalysed reaction is Successive hydrolysis of beta-D-glucose units from the non-reducing ends of (1-&gt;3)-beta-D-glucans, releasing alpha-glucose.. Functionally, beta-glucanases participate in the metabolism of beta-glucan, the main structural component of the cell wall. EXG2 is not heavily involved in the exoglucanase function of the adhesion process. This chain is Glucan 1,3-beta-glucosidase 2 (EXG2), found in Candida albicans (strain SC5314 / ATCC MYA-2876) (Yeast).